The sequence spans 596 residues: NADH-quinone oxidoreductase subunit C/D (596 aa).

The segment at 1–186 is NADH dehydrogenase I subunit C; the sequence is MVDIMCNDST…NPFILTKQKE (186 aa). Positions 210–596 are NADH dehydrogenase I subunit D; it reads NFMFLNLGPN…IDFVMSDVDR (387 aa).

In the N-terminal section; belongs to the complex I 30 kDa subunit family. It in the C-terminal section; belongs to the complex I 49 kDa subunit family. As to quaternary structure, NDH-1 is composed of 13 different subunits. Subunits NuoB, CD, E, F, and G constitute the peripheral sector of the complex.

It localises to the cell inner membrane. The catalysed reaction is a quinone + NADH + 5 H(+)(in) = a quinol + NAD(+) + 4 H(+)(out). In terms of biological role, NDH-1 shuttles electrons from NADH, via FMN and iron-sulfur (Fe-S) centers, to quinones in the respiratory chain. The immediate electron acceptor for the enzyme in this species is believed to be ubiquinone. Couples the redox reaction to proton translocation (for every two electrons transferred, four hydrogen ions are translocated across the cytoplasmic membrane), and thus conserves the redox energy in a proton gradient. This Blochmanniella pennsylvanica (strain BPEN) protein is NADH-quinone oxidoreductase subunit C/D.